The primary structure comprises 58 residues: Large ribosomal subunit protein bL32 (58 aa).

This sequence belongs to the bacterial ribosomal protein bL32 family.

This is Large ribosomal subunit protein bL32 from Prochlorococcus marinus (strain MIT 9515).